The primary structure comprises 385 residues: uncharacterized protein (385 aa).

Helical transmembrane passes span isoleucine 17–threonine 37, threonine 72–leucine 92, tryptophan 107–threonine 127, isoleucine 155–isoleucine 175, tryptophan 191–leucine 211, alanine 295–leucine 315, isoleucine 326–asparagine 346, and isoleucine 354–phenylalanine 374.

The protein resides in the membrane. This is an uncharacterized protein from Mycoplasma capricolum subsp. capricolum (strain California kid / ATCC 27343 / NCTC 10154).